Here is a 911-residue protein sequence, read N- to C-terminus: Nitrate reductase [NADH] (911 aa).

The span at 1–10 (MAASVENRQY) shows a compositional bias: polar residues. Residues 1–71 (MAASVENRQY…SEDEDDDDEK (71 aa)) form a disordered region. Over residues 61-71 (SSEDEDDDDEK) the composition is skewed to acidic residues. Position 188 (Cys188) interacts with Mo-molybdopterin. Residues 536-611 (SKMYSMSEVR…LEDFRIGELI (76 aa)) form the Cytochrome b5 heme-binding domain. Heme is bound by residues His571 and His594. Residues 654–766 (REKIPCKLVD…KGPLGHIEYQ (113 aa)) form the FAD-binding FR-type domain. Residues 706-709 (RAYT), 723-727 (VVKIY), Phe728, Phe735, 740-742 (QMS), and Thr793 contribute to the FAD site.

It belongs to the nitrate reductase family. In terms of assembly, homodimer. It depends on FAD as a cofactor. Requires heme as cofactor. Mo-molybdopterin is required as a cofactor.

It catalyses the reaction nitrite + NAD(+) + H2O = nitrate + NADH + H(+). In terms of biological role, nitrate reductase is a key enzyme involved in the first step of nitrate assimilation in plants, fungi and bacteria. The sequence is that of Nitrate reductase [NADH] (NIA) from Solanum lycopersicum (Tomato).